Here is a 449-residue protein sequence, read N- to C-terminus: Phosphoglucosamine mutase (449 aa).

The Phosphoserine intermediate role is filled by serine 100. Serine 100, aspartate 241, aspartate 243, and aspartate 245 together coordinate Mg(2+). Serine 100 carries the post-translational modification Phosphoserine.

It belongs to the phosphohexose mutase family. The cofactor is Mg(2+). Post-translationally, activated by phosphorylation.

It catalyses the reaction alpha-D-glucosamine 1-phosphate = D-glucosamine 6-phosphate. In terms of biological role, catalyzes the conversion of glucosamine-6-phosphate to glucosamine-1-phosphate. This Clostridium kluyveri (strain NBRC 12016) protein is Phosphoglucosamine mutase.